We begin with the raw amino-acid sequence, 1199 residues long: Putative pyruvate-flavodoxin oxidoreductase (1199 aa).

4Fe-4S ferredoxin-type domains lie at Glu-681–Tyr-710 and Phe-737–Leu-766. Positions 690, 693, 696, 700, 746, 749, 752, 756, 820, 823, 848, and 1079 each coordinate [4Fe-4S] cluster.

Belongs to the pyruvate:ferredoxin/flavodoxin oxidoreductase family. It depends on [4Fe-4S] cluster as a cofactor.

It catalyses the reaction oxidized [flavodoxin] + pyruvate + CoA + 2 H(+) = reduced [flavodoxin] + acetyl-CoA + CO2. In terms of biological role, oxidoreductase required for the transfer of electrons from pyruvate to flavodoxin. This Synechocystis sp. (strain ATCC 27184 / PCC 6803 / Kazusa) protein is Putative pyruvate-flavodoxin oxidoreductase (nifJ).